The chain runs to 106 residues: Iron-sulfur cluster assembly protein CyaY (106 aa).

It belongs to the frataxin family.

In terms of biological role, involved in iron-sulfur (Fe-S) cluster assembly. May act as a regulator of Fe-S biogenesis. This is Iron-sulfur cluster assembly protein CyaY from Salmonella heidelberg (strain SL476).